The chain runs to 275 residues: Phosphate import ATP-binding protein PstB 3 (275 aa).

The interval Met-1 to Pro-26 is disordered. The segment covering Ser-9 to Asp-18 has biased composition (polar residues). Positions Val-31–Ile-270 constitute an ABC transporter domain. Gly-63 to Ser-70 is a binding site for ATP.

This sequence belongs to the ABC transporter superfamily. Phosphate importer (TC 3.A.1.7) family. As to quaternary structure, the complex is composed of two ATP-binding proteins (PstB), two transmembrane proteins (PstC and PstA) and a solute-binding protein (PstS).

It localises to the cell membrane. The enzyme catalyses phosphate(out) + ATP + H2O = ADP + 2 phosphate(in) + H(+). Functionally, part of the ABC transporter complex PstSACB involved in phosphate import. Responsible for energy coupling to the transport system. This is Phosphate import ATP-binding protein PstB 3 from Natronomonas pharaonis (strain ATCC 35678 / DSM 2160 / CIP 103997 / JCM 8858 / NBRC 14720 / NCIMB 2260 / Gabara) (Halobacterium pharaonis).